The chain runs to 265 residues: Keratinocyte-associated transmembrane protein 2 (265 aa).

Positions 1-49 (MAAAALKRMRGPAQAKLLPGSAIQALVGLARPLVLALLLVSAALSSVVS) are cleaved as a signal peptide. The Extracellular portion of the chain corresponds to 50-196 (RTDSPSPTVL…MPSSNIEEED (147 aa)). Positions 72 to 96 (THENQTKPSISQISTTLPPTMSTEK) are enriched in polar residues. Disordered regions lie at residues 72-123 (THEN…EDPS) and 135-168 (SPST…SDDT). N75 is a glycosylation site (N-linked (GlcNAc...) asparagine). Over residues 114–123 (EEADNNEDPS) the composition is skewed to acidic residues. Residues 197–217 (SHFFFHLIIFAFCIAVVYITY) form a helical membrane-spanning segment. Topologically, residues 218-265 (HNKRKIFLLVQSRKWRDGLCSKTVEYHRLDQNVNEAMPSLKITNDYTF) are cytoplasmic. Phosphoserine occurs at positions 229 and 256.

It localises to the membrane. In Pongo abelii (Sumatran orangutan), this protein is Keratinocyte-associated transmembrane protein 2 (KCT2).